Here is a 289-residue protein sequence, read N- to C-terminus: Glyceraldehyde-3-phosphate dehydrogenase (289 aa).

NAD(+)-binding residues include D12 and R57. Residues 128-130 (SCT), T159, 188-189 (TG), and R211 each bind D-glyceraldehyde 3-phosphate. The active-site Nucleophile is the C129.

The protein belongs to the glyceraldehyde-3-phosphate dehydrogenase family. In terms of assembly, homotetramer.

It localises to the cytoplasm. It carries out the reaction D-glyceraldehyde 3-phosphate + phosphate + NAD(+) = (2R)-3-phospho-glyceroyl phosphate + NADH + H(+). It participates in carbohydrate degradation; glycolysis; pyruvate from D-glyceraldehyde 3-phosphate: step 1/5. The chain is Glyceraldehyde-3-phosphate dehydrogenase (GPD) from Amanita muscaria (Fly agaric).